The chain runs to 338 residues: Ankyrin-repeat domain containing transcription coregulator asaA (338 aa).

Positions 1–10 are enriched in basic and acidic residues; sequence MGAPHEEIQA. 2 disordered regions span residues 1–70 and 112–137; these read MGAP…LRST and ASSVSPSSSAGPLSSSPSPSQRPFID. The segment covering 11-33 has biased composition (basic residues); it reads LKRRREQNRLAQRRRRDNVRRRL. Polar residues predominate over residues 42–70; it reads SPASASQTSLCSSTDSRVTLNPHQSLRST. Low complexity predominate over residues 112 to 130; it reads ASSVSPSSSAGPLSSSPSP. ANK repeat units follow at residues 235 to 264, 268 to 297, and 301 to 330; these read RWTTALHMAVSQGNFSVMRLLLSYGADPNA, EGATALHVGVMNGNYTMVAELLQRGADPTL, and AGWLPLHQAVHAGDEGCVRVLLEADQPVDY.

The protein operates within secondary metabolite biosynthesis. Its function is as follows. Transcription coregulator involved in regulation of gene cluster that mediates the biosynthesis of aspergillic acid, a hydroxamic acid-containing pyrazinone with aliphatic side chains that originates from leucine (Leu) and isoleucine (Ile). Aspergillic acid has antibiotic properties and was shown to be lethal to mice. The protein is Ankyrin-repeat domain containing transcription coregulator asaA of Aspergillus flavus (strain ATCC 200026 / FGSC A1120 / IAM 13836 / NRRL 3357 / JCM 12722 / SRRC 167).